The chain runs to 316 residues: KRR1 small subunit processome component (316 aa).

The KH domain occupies 122–192 (ACDVIKIGNF…VRRVVEDCMK (71 aa)). The segment covering 279-304 (KKLNEQKEKQMEREIERQEERAKDFI) has biased composition (basic and acidic residues). The interval 279–316 (KKLNEQKEKQMEREIERQEERAKDFIAPEEEAYKPNQN) is disordered.

Belongs to the KRR1 family. In terms of assembly, component of the ribosomal small subunit (SSU) processome composed of at least 40 protein subunits and snoRNA U3. Interacts with snoRNA U3. Interacts with MPP10, KRI1 and with ribosomal proteins RPS1A, RPS4A, RPS4B, RPS8A, RPS8B, RPS11A, RPS11B, RPS13, RPS24, RPS25, RPL4A, RPL7B, RPL8, RPL23, RPL25 and RPL28.

It is found in the nucleus. The protein resides in the nucleolus. Required for 40S ribosome biogenesis. Involved in nucleolar processing of pre-18S ribosomal RNA and ribosome assembly. Essential for vegetative growth. In Saccharomyces cerevisiae (strain RM11-1a) (Baker's yeast), this protein is KRR1 small subunit processome component.